Here is a 79-residue protein sequence, read N- to C-terminus: Small ribosomal subunit protein bS18 (79 aa).

The protein belongs to the bacterial ribosomal protein bS18 family. As to quaternary structure, part of the 30S ribosomal subunit. Forms a tight heterodimer with protein bS6.

In terms of biological role, binds as a heterodimer with protein bS6 to the central domain of the 16S rRNA, where it helps stabilize the platform of the 30S subunit. The polypeptide is Small ribosomal subunit protein bS18 (Streptococcus suis (strain 98HAH33)).